Here is a 525-residue protein sequence, read N- to C-terminus: GMP synthase [glutamine-hydrolyzing] (525 aa).

The region spanning 12–206 is the Glutamine amidotransferase type-1 domain; it reads RILIIDFGSQ…THGICGCGGD (195 aa). Cys-90 functions as the Nucleophile in the catalytic mechanism. Residues His-180 and Glu-182 contribute to the active site. The GMPS ATP-PPase domain maps to 207-399; it reads WTMAAFKDQA…LGLPDEMVGR (193 aa). 234–240 serves as a coordination point for ATP; that stretch reads SGGVDSS.

As to quaternary structure, homodimer.

The catalysed reaction is XMP + L-glutamine + ATP + H2O = GMP + L-glutamate + AMP + diphosphate + 2 H(+). Its pathway is purine metabolism; GMP biosynthesis; GMP from XMP (L-Gln route): step 1/1. Its function is as follows. Catalyzes the synthesis of GMP from XMP. The polypeptide is GMP synthase [glutamine-hydrolyzing] (Rhodospirillum rubrum (strain ATCC 11170 / ATH 1.1.1 / DSM 467 / LMG 4362 / NCIMB 8255 / S1)).